The sequence spans 330 residues: Small ribosomal subunit protein uS2 (330 aa).

Belongs to the universal ribosomal protein uS2 family.

In Bradyrhizobium sp. (strain BTAi1 / ATCC BAA-1182), this protein is Small ribosomal subunit protein uS2.